The sequence spans 352 residues: Histidinol-phosphate aminotransferase (352 aa).

The residue at position 221 (K221) is an N6-(pyridoxal phosphate)lysine.

The protein belongs to the class-II pyridoxal-phosphate-dependent aminotransferase family. Histidinol-phosphate aminotransferase subfamily. In terms of assembly, homodimer. Requires pyridoxal 5'-phosphate as cofactor.

It carries out the reaction L-histidinol phosphate + 2-oxoglutarate = 3-(imidazol-4-yl)-2-oxopropyl phosphate + L-glutamate. Its pathway is amino-acid biosynthesis; L-histidine biosynthesis; L-histidine from 5-phospho-alpha-D-ribose 1-diphosphate: step 7/9. This chain is Histidinol-phosphate aminotransferase, found in Staphylococcus aureus (strain MRSA252).